The chain runs to 185 residues: MAVEKDQQKDAEAEGLSAATLLPKLIPSGAGREWLERRRATIRSWGSFVDQRRFSRPRNLGELCQRLVRNVEYYQSNYVFVFLGLILYCVATSPMLLVALAVFFGACYILYLRTLQSKFVLFGREVSPAHQYALAGGVSFPFFWLAGAGSAVFWVLGATLVVIGSHAAFHQIEAVDGEELQMEPV.

The Cytoplasmic segment spans residues 1–78 (MAVEKDQQKD…RNVEYYQSNY (78 aa)). The segment at 30 to 54 (AGREWLERRRATIRSWGSFVDQRRF) is required for interaction with prenylated RAB3A and VAMP2. A run of 2 helical transmembrane segments spans residues 79 to 94 (VFVF…ATSP) and 95 to 112 (MLLV…ILYL). At 113-131 (RTLQSKFVLFGREVSPAHQ) the chain is on the cytoplasmic side. 2 helical membrane-spanning segments follow: residues 132–148 (YALA…LAGA) and 149–165 (GSAV…VIGS). Positions 165–185 (SHAAFHQIEAVDGEELQMEPV) are required for interaction with GDI1. The Cytoplasmic segment spans residues 166–185 (HAAFHQIEAVDGEELQMEPV). The required for interaction with prenylated RAB3A and VAMP2 stretch occupies residues 175-185 (VDGEELQMEPV). The interval 175–185 (VDGEELQMEPV) is homodimerization.

The protein belongs to the PRA1 family. In terms of assembly, homodimer. Interacts with VAMP2 (synaptobrevin-2), prenylated Rab proteins, GDI1, NDRG1 and PCLO.

It localises to the cell membrane. Its subcellular location is the cytoplasm. The protein resides in the golgi apparatus. It is found in the cytoplasmic vesicle. The protein localises to the secretory vesicle. It localises to the synaptic vesicle. General Rab protein regulator required for vesicle formation from the Golgi complex. May control vesicle docking and fusion by mediating the action of Rab GTPases to the SNARE complexes. In addition it inhibits the removal of Rab GTPases from the membrane by GDI1. The protein is Prenylated Rab acceptor protein 1 (RABAC1) of Bos taurus (Bovine).